Reading from the N-terminus, the 24-residue chain is FLGGLMKIGAKLLPSVIGLFKKKQ.

This sequence belongs to the non-disulfide-bridged peptide (NDBP) superfamily. Medium-length antimicrobial peptide (group 3) family. Ponericin-W subfamily. Expressed by the venom gland.

The protein resides in the secreted. The protein localises to the target cell membrane. In terms of biological role, has a broad spectrum of activity against both Gram-positive and Gram-negative bacteria and S.cerevisiae. Has insecticidal and hemolytic activities. May act by disrupting the integrity of the bacterial cell membrane. In Neoponera apicalis (Ant), this protein is U1-poneritoxin-Na1a.